Here is a 233-residue protein sequence, read N- to C-terminus: MDAREIIEMIAKAKKKTPIVAYIKGDLAGIDFSSFKFFGDEKFGILFGEYEDFKKLLEEHKEKIEDYHLEVKARNSALPLADITKYKARIEPGAIIRDMVEIGEGAVIMMGAVINVGAVIGEGTMIDMNAVIGGRAIIGKKCHIGAGAVIAGVIEPPSAKPVVIEDEVVVGANAVILEGVTVGKGAVVAAGAVVTKDVPPYTVVAGVPARVIKQIDERTKEKTKIVDELRNLE.

Belongs to the transferase hexapeptide repeat family. DapH subfamily.

It catalyses the reaction (S)-2,3,4,5-tetrahydrodipicolinate + acetyl-CoA + H2O = L-2-acetamido-6-oxoheptanedioate + CoA. It functions in the pathway amino-acid biosynthesis; L-lysine biosynthesis via DAP pathway; LL-2,6-diaminopimelate from (S)-tetrahydrodipicolinate (acetylase route): step 1/3. Its function is as follows. Catalyzes the transfer of an acetyl group from acetyl-CoA to tetrahydrodipicolinate. This chain is 2,3,4,5-tetrahydropyridine-2,6-dicarboxylate N-acetyltransferase, found in Thermotoga petrophila (strain ATCC BAA-488 / DSM 13995 / JCM 10881 / RKU-1).